We begin with the raw amino-acid sequence, 466 residues long: Rhodanese-like domain-containing protein 4, chloroplastic (466 aa).

The N-terminal 15 residues, 1–15, are a transit peptide targeting the chloroplast; it reads MEALKTATFSPMSVL. The interval 1–35 is disordered; that stretch reads MEALKTATFSPMSVLSEKRSEPRKPFSLPNLFPPK. The transit peptide at 16 to 69 directs the protein to the thylakoid; sequence SEKRSEPRKPFSLPNLFPPKSQRPISQESFLKRFNGGLALLTSVLSSATAPAKS. Residues 103–123 traverse the membrane as a helical segment; the sequence is PLVIAGGVAALAVPFVLSQVL. The Rhodanese domain maps to 144–250; the sequence is TDDNAQLLDI…WLNSSLPWIE (107 aa). Residues 277–297 traverse the membrane as a helical segment; that stretch reads VSVALGVAAAAGLSVFAFTEI. Positions 373–384 are enriched in low complexity; that stretch reads EAESATATTTTV. Disordered regions lie at residues 373-392 and 426-466; these read EAES…PEPE and AQVI…PSQP. Pro residues predominate over residues 455-466; that stretch reads LKPPSSPMPSQP.

As to quaternary structure, component of high molecular weight thylakoid LFNRs-containing protein complexes containing LIR1, LFNR1, LFNR2, TIC62 and TROL proteins. Expressed in leaves and stems, and at lower levels in flowers and siliques (at protein level).

Its subcellular location is the plastid. It localises to the chloroplast envelope. It is found in the chloroplast thylakoid membrane. Rhodanese domain-containing protein required for anchoring ferredoxin--NADP reductase to the thylakoid membranes and sustaining efficient linear electron flow (LEF). The sequence is that of Rhodanese-like domain-containing protein 4, chloroplastic from Arabidopsis thaliana (Mouse-ear cress).